Reading from the N-terminus, the 140-residue chain is Phosphopantetheine adenylyltransferase (140 aa).

Ser-9 contacts substrate. Residues 9 to 10 and His-17 each bind ATP; that span reads SF. Residues Lys-41, Thr-74, and Arg-88 each contribute to the substrate site. Residues 89–91, Glu-99, and 124–130 each bind ATP; these read GLR and KRSLSST.

The protein belongs to the bacterial CoaD family. Homohexamer. Requires Mg(2+) as cofactor.

The protein localises to the cytoplasm. It catalyses the reaction (R)-4'-phosphopantetheine + ATP + H(+) = 3'-dephospho-CoA + diphosphate. The protein operates within cofactor biosynthesis; coenzyme A biosynthesis; CoA from (R)-pantothenate: step 4/5. Its function is as follows. Reversibly transfers an adenylyl group from ATP to 4'-phosphopantetheine, yielding dephospho-CoA (dPCoA) and pyrophosphate. This Mycoplasma mycoides subsp. mycoides SC (strain CCUG 32753 / NCTC 10114 / PG1) protein is Phosphopantetheine adenylyltransferase.